A 447-amino-acid polypeptide reads, in one-letter code: UDP-glycosyltransferase 79B10 (447 aa).

Residues Ser-260, 319–321 (VQQ), 336–344 (HCGFGSMWE), and 358–361 (LADQ) each bind UDP-alpha-D-glucose.

The protein belongs to the UDP-glycosyltransferase family.

In Arabidopsis thaliana (Mouse-ear cress), this protein is UDP-glycosyltransferase 79B10 (UGT79B10).